Reading from the N-terminus, the 268-residue chain is Small ribosomal subunit protein uS3 (268 aa).

Residues 40–110 form the KH type-2 domain; sequence IRNLFFINYR…KLDLTINEIG (71 aa).

Belongs to the universal ribosomal protein uS3 family. Part of the 30S ribosomal subunit. Forms a tight complex with proteins S10 and S14.

Its function is as follows. Binds the lower part of the 30S subunit head. Binds mRNA in the 70S ribosome, positioning it for translation. The sequence is that of Small ribosomal subunit protein uS3 from Mycoplasma genitalium (strain ATCC 33530 / DSM 19775 / NCTC 10195 / G37) (Mycoplasmoides genitalium).